Consider the following 330-residue polypeptide: Flotillin-like protein FloA (330 aa).

Helical transmembrane passes span 3–23 and 26–46; these read IISV…TLYM and LRLW…TLIA.

Belongs to the flotillin-like FloA family. As to quaternary structure, homooligomerizes.

The protein localises to the cell membrane. Its subcellular location is the membrane raft. Found in functional membrane microdomains (FMM) that may be equivalent to eukaryotic membrane rafts. FMMs are highly dynamic and increase in number as cells age. Flotillins are thought to be important factors in membrane fluidity. In Sorangium cellulosum (strain So ce56) (Polyangium cellulosum (strain So ce56)), this protein is Flotillin-like protein FloA.